We begin with the raw amino-acid sequence, 150 residues long: UPF0208 membrane protein VIBHAR_02941 (150 aa).

2 consecutive transmembrane segments (helical) span residues 42 to 62 (FGIKVMPAVAAISVLTQMAFN) and 70 to 90 (AIVVALFAISMPLQGMWWLGS).

The protein belongs to the UPF0208 family.

It localises to the cell inner membrane. The sequence is that of UPF0208 membrane protein VIBHAR_02941 from Vibrio campbellii (strain ATCC BAA-1116).